Here is a 125-residue protein sequence, read N- to C-terminus: Small ribosomal subunit protein uS13 (125 aa).

The protein belongs to the universal ribosomal protein uS13 family. As to quaternary structure, part of the 30S ribosomal subunit. Forms a loose heterodimer with protein S19. Forms two bridges to the 50S subunit in the 70S ribosome.

Functionally, located at the top of the head of the 30S subunit, it contacts several helices of the 16S rRNA. In the 70S ribosome it contacts the 23S rRNA (bridge B1a) and protein L5 of the 50S subunit (bridge B1b), connecting the 2 subunits; these bridges are implicated in subunit movement. Contacts the tRNAs in the A and P-sites. The protein is Small ribosomal subunit protein uS13 of Orientia tsutsugamushi (strain Ikeda) (Rickettsia tsutsugamushi).